The following is a 408-amino-acid chain: Ribonuclease T2-like (408 aa).

A signal peptide spans 1 to 25 (MLQSIPGPQHILKALTGSLGLSTIF). 4 disulfide bridges follow: Cys-38–Cys-56, Cys-45–Cys-92, Cys-55–Cys-158, and Cys-100–Cys-150. The active site involves His-85. Asn-108 carries an N-linked (GlcNAc...) asparagine glycan. Residues Glu-143 and His-147 contribute to the active site. An N-linked (GlcNAc...) asparagine glycan is attached at Asn-173. Cysteines 222 and 257 form a disulfide. Positions 268–292 (KHREPSRTTDTPSQPTTTGTPFKGR) are disordered. Low complexity predominate over residues 275–288 (TTDTPSQPTTTGTP). The N-linked (GlcNAc...) asparagine glycan is linked to Asn-372.

The protein belongs to the RNase T2 family.

It is found in the vacuole lumen. Its subcellular location is the cytoplasm. It catalyses the reaction a ribonucleotidyl-ribonucleotide-RNA + H2O = a 3'-end 3'-phospho-ribonucleotide-RNA + a 5'-end dephospho-ribonucleoside-RNA + H(+). Rnase which modulates cell survival under stress conditions. Released from the vacuole to the cytoplasm during stress to promote tRNA and rRNA cleavage and to activate separately a downstream pathway that promotes cell death. Involved in cell size, vacuolar morphology and growth at high temperatures and high salt concentration. The polypeptide is Ribonuclease T2-like (rny1) (Aspergillus fumigatus (strain ATCC MYA-4609 / CBS 101355 / FGSC A1100 / Af293) (Neosartorya fumigata)).